A 463-amino-acid chain; its full sequence is Probable glycosyltransferase 3 (463 aa).

Topologically, residues 1–24 (MAVTGGGRPAVRQQAARGKQMQRT) are cytoplasmic. The chain crosses the membrane as a helical; Signal-anchor for type II membrane protein span at residues 25–47 (FNNVKITLICGFITLLVLRGTVG). The Lumenal segment spans residues 48–463 (INLLTYGVGG…ALKMDAKIES (416 aa)). Residues 82 to 125 (EIRSDTDDDDDDEEEEPLGVDASTTTTTNSTTTTATAARRRSSN) form a disordered region. The segment covering 87–99 (TDDDDDDEEEEPL) has biased composition (acidic residues). Low complexity predominate over residues 103–118 (ASTTTTTNSTTTTATA). N-linked (GlcNAc...) asparagine glycans are attached at residues asparagine 110, asparagine 125, and asparagine 442.

Belongs to the glycosyltransferase 34 family.

The protein resides in the golgi apparatus membrane. Its function is as follows. Probable glycosyltransferase that may be involved in the biosynthesis of xyloglucan. The protein is Probable glycosyltransferase 3 of Oryza sativa subsp. japonica (Rice).